Reading from the N-terminus, the 340-residue chain is Arginase 1, mitochondrial (340 aa).

A mitochondrion-targeting transit peptide spans 1 to 24 (MGGVAAGTRWIHHVRRLSAAKVST). The Mn(2+) site is built by His-159, Asp-183, His-185, and Asp-187. Substrate-binding positions include 185–189 (HPDIY) and 193–195 (EGN). The Mn(2+) site is built by Asp-268 and Asp-270. A substrate-binding site is contributed by Glu-311.

Belongs to the arginase family. It depends on Mn(2+) as a cofactor.

It is found in the mitochondrion. The enzyme catalyses L-arginine + H2O = urea + L-ornithine. Its pathway is nitrogen metabolism; urea cycle; L-ornithine and urea from L-arginine: step 1/1. In terms of biological role, catalyzes the hydrolysis of L-arginine to urea and L-ornithine. The latter can be utilized in the urea cycle or as a precursor for the synthesis of both polyamines and proline. The chain is Arginase 1, mitochondrial from Oryza sativa subsp. indica (Rice).